The primary structure comprises 207 residues: Small ribosomal subunit protein uS4 (207 aa).

The disordered stretch occupies residues 31 to 55 (KCKLDSKPGQHGRTSGARTSDYGTQ). Residues 42 to 53 (GRTSGARTSDYG) show a composition bias toward polar residues. The region spanning 97-157 (SRLDNVVYRM…EQKKKQARIL (61 aa)) is the S4 RNA-binding domain.

It belongs to the universal ribosomal protein uS4 family. Part of the 30S ribosomal subunit. Contacts protein S5. The interaction surface between S4 and S5 is involved in control of translational fidelity.

Its function is as follows. One of the primary rRNA binding proteins, it binds directly to 16S rRNA where it nucleates assembly of the body of the 30S subunit. With S5 and S12 plays an important role in translational accuracy. The chain is Small ribosomal subunit protein uS4 from Paraburkholderia xenovorans (strain LB400).